The sequence spans 179 residues: MAEERSQRSRDRSREEKIDDGMIEKLVAVNRVSKTVKGGRQFTFTALTIVGNGEGSVGFGYGKAREVPVAIQKSMEYARKRMANVSLNNGTLWHPVKANHGAASVFMKPASEGTGVIAGGAMRAVLEAVGVKDVLAKAIGSRNPINLVRATLKGLEDMQSPTHIALKRGKNVRDFSHGS.

The 64-residue stretch at 22-85 (MIEKLVAVNR…EYARKRMANV (64 aa)) folds into the S5 DRBM domain.

The protein belongs to the universal ribosomal protein uS5 family. Part of the 30S ribosomal subunit. Contacts proteins S4 and S8.

Its function is as follows. With S4 and S12 plays an important role in translational accuracy. In terms of biological role, located at the back of the 30S subunit body where it stabilizes the conformation of the head with respect to the body. The chain is Small ribosomal subunit protein uS5 from Xylella fastidiosa (strain M12).